The primary structure comprises 298 residues: Estradiol 17-beta-dehydrogenase 11 (298 aa).

The signal sequence occupies residues Met1–Ser21. Leu40 to Val64 lines the NADP(+) pocket. Ser172 contributes to the substrate binding site. The active-site Proton acceptor is the Tyr185.

The protein belongs to the short-chain dehydrogenases/reductases (SDR) family. 17-beta-HSD 3 subfamily.

The protein localises to the endoplasmic reticulum. The protein resides in the lipid droplet. It catalyses the reaction 17beta-estradiol + NAD(+) = estrone + NADH + H(+). The catalysed reaction is 17beta-estradiol + NADP(+) = estrone + NADPH + H(+). In terms of biological role, can convert androstan-3-alpha,17-beta-diol (3-alpha-diol) to androsterone in vitro, suggesting that it may participate in androgen metabolism during steroidogenesis. May act by metabolizing compounds that stimulate steroid synthesis and/or by generating metabolites that inhibit it. Has no activity toward DHEA (dehydroepiandrosterone), or A-dione (4-androste-3,17-dione), and only a slight activity toward testosterone to A-dione. The sequence is that of Estradiol 17-beta-dehydrogenase 11 (Hsd17b11) from Rattus norvegicus (Rat).